Consider the following 180-residue polypeptide: UPF0149 protein XOO1028 (180 aa).

The protein belongs to the UPF0149 family.

This is UPF0149 protein XOO1028 from Xanthomonas oryzae pv. oryzae (strain MAFF 311018).